The following is a 271-amino-acid chain: MLQACKMEGFPLVAPPSDELVTYESELYQRQTHDYYSLIGGDGDSHSDHYWDFSTHHVHSEFESFPENHFTELQSVQPPQLQQLYRHMELEQMHVLDTPMAPPHASLSHQVSYMPRVCFPYPPLSPAHQQSSDEEEGERQSPPLEVSDGEADGLEPGPGLLHGETGSKKKIRLYQFLLDLLRSGDMKDSIWWVDKDKGTFQFSSKHKEALAHRWGIQKGNRKKMTYQKMARALRNYGKTGEVKKVKKKLTYQFSGEVLGRGGLAERRLPPH.

The segment at 124–164 (LSPAHQQSSDEEEGERQSPPLEVSDGEADGLEPGPGLLHGE) is disordered. 2 positions are modified to phosphoserine: Ser-141 and Ser-147. Positions 154 to 164 (LEPGPGLLHGE) are enriched in low complexity. The segment at residues 171–254 (IRLYQFLLDL…VKKKLTYQFS (84 aa)) is a DNA-binding region (ETS). DNA contacts are provided by Lys-218, Arg-231, Arg-234, and Lys-244.

It belongs to the ETS family. As to quaternary structure, binds DNA as a monomer. Can form homomers. Directly interacts with CEBPD/NF-IL6-beta; this interaction does not affect DNA-binding properties of each partner. Interacts with NONO/p54(nrb). Interacts with RUNX1/AML1. Interacts with GFI1; the interaction represses SPI1 transcriptional activity, hence blocks SPI1-induced macrophage differentiation of myeloid progenitor cells. Interacts with CEBPE. Interacts with IRF4/Pip and IRF8. Interacts with JUN. Interacts with RB1. Interacts with TBP.

The protein localises to the nucleus. With respect to regulation, transcriptional activity at macrophage-specific genes is inhibited by interaction with GFI1, which results in the inhibition of SPI1-induced macrophage differentiation of myeloid progenitor cells, but not that of the granulocyte lineage. In terms of biological role, pioneer transcription factor, which controls hematopoietic cell fate by decompacting stem cell heterochromatin and allowing other transcription factors to enter otherwise inaccessible genomic sites. Once in open chromatin, can directly control gene expression by binding genetic regulatory elements and can also more broadly influence transcription by recruiting transcription factors, such as interferon regulatory factors (IRFs), to otherwise inaccessible genomic regions. Transcriptionally activates genes important for myeloid and lymphoid lineages, such as CSF1R or FCER1A. Transcriptional activation from certain promoters, possibly containing low affinity binding sites, is achieved cooperatively with other transcription factors. FCER1A transactivation is achieved in cooperation with GATA1. May be particularly important for the pro- to pre-B cell transition. Binds (via the ETS domain) onto the purine-rich DNA core sequence 5'-GAGGAA-3', also known as the PU-box. In vitro can bind RNA and interfere with pre-mRNA splicing. The sequence is that of Transcription factor PU.1 (Spi1) from Rattus norvegicus (Rat).